The sequence spans 473 residues: Mogroside IIIx synthase (473 aa).

His21 functions as the Proton acceptor in the catalytic mechanism. Residue Asp123 is the Charge relay of the active site. 8 residues coordinate UDP-alpha-D-glucose: Thr274, Gln337, Trp355, Asn356, Ser357, Glu360, Asp376, and Gln377.

It belongs to the UDP-glycosyltransferase family. As to expression, highly expressed in mature fruits.

The enzyme catalyses mogroside IIE + UDP-alpha-D-glucose = mogroside IIIX + UDP + H(+). The catalysed reaction is mogroside III + UDP-alpha-D-glucose = siamenoside I + UDP + H(+). The protein operates within secondary metabolite biosynthesis; terpenoid biosynthesis. In terms of biological role, UDP-glycosyltransferase involved in the biosynthesis of cucurbitacin and mogroside tetracyclic triterpene natural products (e.g. siamenoside I and mogrosides IV, V and VI). Cucurbitacins have cytotoxic properties and exhibit deterrent taste as a defense barrier against herbivores. Mogrosides are nonsugar highly oxygenated compounds used as high-intensity zero-calorie sweeteners; they also possess pharmacological properties such as regulating immunity, lowering blood sugar and lipid levels, protecting the liver, and acting as antioxidants and antitumor agents. Catalyzes the branched glucosylations of mogroside II-E and mogroside III. This Siraitia grosvenorii (Monk's fruit) protein is Mogroside IIIx synthase.